The chain runs to 72 residues: Translation initiation factor IF-1 (72 aa).

One can recognise an S1-like domain in the interval 1–72 (MAKDDVIEVE…TRGRITYRYK (72 aa)). Tyr60 carries the post-translational modification Phosphotyrosine.

This sequence belongs to the IF-1 family. Component of the 30S ribosomal translation pre-initiation complex which assembles on the 30S ribosome in the order IF-2 and IF-3, IF-1 and N-formylmethionyl-tRNA(fMet); mRNA recruitment can occur at any time during PIC assembly.

Its subcellular location is the cytoplasm. In terms of biological role, one of the essential components for the initiation of protein synthesis. Stabilizes the binding of IF-2 and IF-3 on the 30S subunit to which N-formylmethionyl-tRNA(fMet) subsequently binds. Helps modulate mRNA selection, yielding the 30S pre-initiation complex (PIC). Upon addition of the 50S ribosomal subunit IF-1, IF-2 and IF-3 are released leaving the mature 70S translation initiation complex. This Bacillus pumilus (strain SAFR-032) protein is Translation initiation factor IF-1.